The following is a 389-amino-acid chain: Chalcone synthase J (389 aa).

The active site involves Cys164.

It belongs to the thiolase-like superfamily. Chalcone/stilbene synthases family.

The catalysed reaction is (E)-4-coumaroyl-CoA + 3 malonyl-CoA + 3 H(+) = 2',4,4',6'-tetrahydroxychalcone + 3 CO2 + 4 CoA. It participates in secondary metabolite biosynthesis; flavonoid biosynthesis. The primary product of this enzyme is 4,2',4',6'-tetrahydroxychalcone (also termed naringenin-chalcone or chalcone) which can under specific conditions spontaneously isomerize into naringenin. This chain is Chalcone synthase J (CHSJ), found in Petunia hybrida (Petunia).